The chain runs to 77 residues: Small ribosomal subunit protein uS17c (77 aa).

The protein belongs to the universal ribosomal protein uS17 family. Part of the 30S ribosomal subunit.

It localises to the plastid. The protein localises to the chloroplast. Its function is as follows. One of the primary rRNA binding proteins, it binds specifically to the 5'-end of 16S ribosomal RNA. The polypeptide is Small ribosomal subunit protein uS17c (rps17) (Cyanidium caldarium (Red alga)).